A 1905-amino-acid chain; its full sequence is von Willebrand factor A domain-containing protein 8 (1905 aa).

A mitochondrion-targeting transit peptide spans 1-45 (MQSRLLLLGAPGGLGDVASRRVRLLLRQVLRGRPGGDQQRLEVRL). The interaction with PEX7 stretch occupies residues 1 to 260 (MQSRLLLLGA…PLDPPLRSRF (260 aa)). 446-453 (GGKGCGKT) provides a ligand contact to ATP. Residues 1541-1560 (ERDSNEDVSDPKHGKEDPDN) are compositionally biased toward basic and acidic residues. The tract at residues 1541-1583 (ERDSNEDVSDPKHGKEDPDNMPHVGGNTWAGGTGGRDTAGLGG) is disordered. The segment covering 1568–1583 (TWAGGTGGRDTAGLGG) has biased composition (gly residues). One can recognise a VWFA domain in the interval 1714-1896 (RLRLVVDVSG…KKIPQILQQI (183 aa)).

As to quaternary structure, monomer. Interacts with PEX7. Interacts with PEX5 in a PEX7-dependent manner. In terms of tissue distribution, isoform 1 is predominantly expressed in liver, kidney, pancreas, heart, and skeletal muscle (at protein level).

The protein resides in the mitochondrion. Exhibits ATPase activity in vitro. This is von Willebrand factor A domain-containing protein 8 (Vwa8) from Mus musculus (Mouse).